The primary structure comprises 213 residues: Large ribosomal subunit protein uL3 (213 aa).

The protein belongs to the universal ribosomal protein uL3 family. Part of the 50S ribosomal subunit. Forms a cluster with proteins L14 and L19.

One of the primary rRNA binding proteins, it binds directly near the 3'-end of the 23S rRNA, where it nucleates assembly of the 50S subunit. This chain is Large ribosomal subunit protein uL3, found in Petrotoga mobilis (strain DSM 10674 / SJ95).